The following is a 162-amino-acid chain: MRHNKKFNHLGRTASHRSAMLSNMACSLIKHKRITTTVAKAKALKKFVEPLITKSKDDTTNSRRVVFSNLQDKFAVTELFKEISVKVADRPGGYTRIIKTGHRLGDNAEMCFIELVDYDENMAKTATAKKATRTRRSKKSAAATEAPAAPAAETTEEAPKAE.

Residues alanine 126–glutamate 162 form a disordered region. Over residues lysine 130–lysine 139 the composition is skewed to basic residues. Residues serine 140–glutamate 153 show a composition bias toward low complexity.

It belongs to the bacterial ribosomal protein bL17 family. As to quaternary structure, part of the 50S ribosomal subunit. Contacts protein L32.

The chain is Large ribosomal subunit protein bL17 from Phocaeicola vulgatus (strain ATCC 8482 / DSM 1447 / JCM 5826 / CCUG 4940 / NBRC 14291 / NCTC 11154) (Bacteroides vulgatus).